The chain runs to 168 residues: DNA damage-inducible transcript 3 protein (168 aa).

Residues 10–18 (LETVSSWEL) are interaction with TRIB3. The N-terminal stretch occupies residues 10–26 (LETVSSWELEAWYEDLQ). Phosphoserine; by CK2 is present on residues S14, S15, S30, and S31. Over residues 30-43 (SSDENGGPYSSSLG) the composition is skewed to polar residues. A disordered region spans residues 30–168 (SSDENGGPYS…DRPHVNLQQV (139 aa)). The span at 74-87 (SSSQSPRSPDSSQS) shows a compositional bias: low complexity. Residues S78 and S81 each carry the phosphoserine; by MAPK14 modification. The bZIP domain maps to 98–161 (GRTRKRKQSG…EATRPGSDRP (64 aa)). The basic motif stretch occupies residues 101–129 (RKRKQSGQCPARGTGKQRMKEKEQENERK). A compositionally biased stretch (basic and acidic residues) spans 118 to 162 (RMKEKEQENERKVAQLAEENERLKQEIERLTREVEATRPGSDRPH). The tract at residues 133 to 147 (LAEENERLKQEIERL) is leucine-zipper.

The protein belongs to the bZIP family. Heterodimer. Interacts with TCF7L2/TCF4, EP300/P300, HDAC1, HDAC5 and HDAC6. Interacts with TRIB3 which blocks its association with EP300/P300. Interacts with FOXO3, CEBPB and ATF4. Ubiquitinated, leading to its degradation by the proteasome. Post-translationally, phosphorylation at serine residues by MAPK14 enhances its transcriptional activation activity while phosphorylation at serine residues by CK2 inhibits its transcriptional activation activity.

The protein localises to the cytoplasm. Its subcellular location is the nucleus. Functionally, multifunctional transcription factor in ER stress response. Plays an essential role in the response to a wide variety of cell stresses and induces cell cycle arrest and apoptosis in response to ER stress. Plays a dual role both as an inhibitor of CCAAT/enhancer-binding protein (C/EBP) function and as an activator of other genes. Acts as a dominant-negative regulator of C/EBP-induced transcription: dimerizes with members of the C/EBP family, impairs their association with C/EBP binding sites in the promoter regions, and inhibits the expression of C/EBP regulated genes. Positively regulates the transcription of TRIB3, IL6, IL8, IL23, TNFRSF10B/DR5, PPP1R15A/GADD34, BBC3/PUMA, BCL2L11/BIM and ERO1L. Negatively regulates; expression of BCL2 and MYOD1, ATF4-dependent transcriptional activation of asparagine synthetase (ASNS), CEBPA-dependent transcriptional activation of hepcidin (HAMP) and CEBPB-mediated expression of peroxisome proliferator-activated receptor gamma (PPARG). Inhibits the canonical Wnt signaling pathway by binding to TCF7L2/TCF4, impairing its DNA-binding properties and repressing its transcriptional activity. Plays a regulatory role in the inflammatory response through the induction of caspase-11 (CASP4/CASP11) which induces the activation of caspase-1 (CASP1) and both these caspases increase the activation of pro-IL1B to mature IL1B which is involved in the inflammatory response. This Cricetulus griseus (Chinese hamster) protein is DNA damage-inducible transcript 3 protein (DDIT3).